Consider the following 335-residue polypeptide: 34 kDa spicule matrix protein (335 aa).

An N-terminal signal peptide occupies residues 1–17 (MKGLLLILASLVAIATG). The C-type lectin domain maps to 29–194 (SGASCYRYFN…ATAMRAFVCE (166 aa)). An intrachain disulfide couples Cys-50 to Cys-193. The segment at 199-335 (QNIPPGQQPG…QEAETDVTGS (137 aa)) is disordered. Over residues 207–310 (PGFGGQQPGF…GGPQRPGMGG (104 aa)) the composition is skewed to gly residues. Low complexity predominate over residues 311–323 (QPNSPNPRFNRPR).

This sequence belongs to the SM50 family. As to expression, embryo spicule.

It localises to the secreted. Major matrix protein of the sea urchin embryo spicule which directs crystal growth in certain orientations and inhibit growth in others. The polypeptide is 34 kDa spicule matrix protein (Lytechinus pictus (Painted sea urchin)).